The following is a 387-amino-acid chain: Anhydro-N-acetylmuramic acid kinase (387 aa).

G17–D24 provides a ligand contact to ATP.

It belongs to the anhydro-N-acetylmuramic acid kinase family.

It catalyses the reaction 1,6-anhydro-N-acetyl-beta-muramate + ATP + H2O = N-acetyl-D-muramate 6-phosphate + ADP + H(+). Its pathway is amino-sugar metabolism; 1,6-anhydro-N-acetylmuramate degradation. It participates in cell wall biogenesis; peptidoglycan recycling. Its function is as follows. Catalyzes the specific phosphorylation of 1,6-anhydro-N-acetylmuramic acid (anhMurNAc) with the simultaneous cleavage of the 1,6-anhydro ring, generating MurNAc-6-P. Is required for the utilization of anhMurNAc either imported from the medium or derived from its own cell wall murein, and thus plays a role in cell wall recycling. The polypeptide is Anhydro-N-acetylmuramic acid kinase (Burkholderia pseudomallei (strain K96243)).